Here is a 184-residue protein sequence, read N- to C-terminus: Ribosome-recycling factor (184 aa).

The segment at 141-165 is disordered; it reads DEKNGDITEDDLRSQTDDVQKATDN.

Belongs to the RRF family.

It localises to the cytoplasm. Its function is as follows. Responsible for the release of ribosomes from messenger RNA at the termination of protein biosynthesis. May increase the efficiency of translation by recycling ribosomes from one round of translation to another. The sequence is that of Ribosome-recycling factor from Staphylococcus epidermidis (strain ATCC 35984 / DSM 28319 / BCRC 17069 / CCUG 31568 / BM 3577 / RP62A).